Here is a 419-residue protein sequence, read N- to C-terminus: DNA ligase (419 aa).

Residues 1-120 (MLNHFPGHCS…ARQKRGAHTN (120 aa)) form an NTD region. The segment at 121-317 (TGMIPPMLVK…NYHSAHLAKL (197 aa)) is AD domain. Lys-151 (N6-AMP-lysine intermediate) is an active-site residue. Residues 318 to 419 (KPLLDAEFIL…REPINVLEII (102 aa)) are OB domain.

It belongs to the ATP-dependent DNA ligase family.

Its subcellular location is the virion. It carries out the reaction ATP + (deoxyribonucleotide)n-3'-hydroxyl + 5'-phospho-(deoxyribonucleotide)m = (deoxyribonucleotide)n+m + AMP + diphosphate.. Its function is as follows. Very low-fidelity DNA ligase that seals nicks in double-stranded DNA during DNA repair. Together with the viral repair DNA polymerase X, fills the single nucleotide gaps generated by the AP endonuclease. It is not essential for viral replication and recombination. Displays a very low adenylation activity towards DNA with 3'-dideoxy- or 3'-amino-terminated nicks compared to regular nick DNA. The chain is DNA ligase from Ornithodoros (relapsing fever ticks).